The chain runs to 177 residues: ATP synthase subunit delta (177 aa).

It belongs to the ATPase delta chain family. F-type ATPases have 2 components, F(1) - the catalytic core - and F(0) - the membrane proton channel. F(1) has five subunits: alpha(3), beta(3), gamma(1), delta(1), epsilon(1). F(0) has three main subunits: a(1), b(2) and c(10-14). The alpha and beta chains form an alternating ring which encloses part of the gamma chain. F(1) is attached to F(0) by a central stalk formed by the gamma and epsilon chains, while a peripheral stalk is formed by the delta and b chains.

It localises to the cell inner membrane. Functionally, f(1)F(0) ATP synthase produces ATP from ADP in the presence of a proton or sodium gradient. F-type ATPases consist of two structural domains, F(1) containing the extramembraneous catalytic core and F(0) containing the membrane proton channel, linked together by a central stalk and a peripheral stalk. During catalysis, ATP synthesis in the catalytic domain of F(1) is coupled via a rotary mechanism of the central stalk subunits to proton translocation. This protein is part of the stalk that links CF(0) to CF(1). It either transmits conformational changes from CF(0) to CF(1) or is implicated in proton conduction. The protein is ATP synthase subunit delta of Haemophilus influenzae (strain PittGG).